Reading from the N-terminus, the 221-residue chain is Probable septum site-determining protein MinC (221 aa).

It belongs to the MinC family. Interacts with MinD and FtsZ.

In terms of biological role, cell division inhibitor that blocks the formation of polar Z ring septums. Rapidly oscillates between the poles of the cell to destabilize FtsZ filaments that have formed before they mature into polar Z rings. Prevents FtsZ polymerization. The chain is Probable septum site-determining protein MinC from Aliivibrio fischeri (strain MJ11) (Vibrio fischeri).